Reading from the N-terminus, the 598-residue chain is DNA polymerase alpha subunit B (598 aa).

Polar residues predominate over residues 112-140 (SYTTPSKGSQKRAISTPETPLTKRSVSTR). A disordered region spans residues 112–167 (SYTTPSKGSQKRAISTPETPLTKRSVSTRSPHQLLSPSSFSPSATPSQKYNSRSNR). Serine 126 carries the phosphoserine modification. A phosphothreonine mark is found at threonine 127 and threonine 130. 4 positions are modified to phosphoserine: serine 141, serine 147, serine 152, and serine 154. Low complexity predominate over residues 141–158 (SPHQLLSPSSFSPSATPS).

It belongs to the DNA polymerase alpha subunit B family. In terms of assembly, component of the alpha DNA polymerase complex (also known as the alpha DNA polymerase-primase complex) consisting of four subunits: the catalytic subunit POLA1, the regulatory subunit POLA2, and primase complex subunits PRIM1 and PRIM2 respectively. Within the complex, POLA1 directly interacts with PRIM2/p58. Phosphorylated in a cell cycle-dependent manner, in G2/M phase.

It is found in the nucleus. Its function is as follows. Accessory subunit of the DNA polymerase alpha complex (also known as the alpha DNA polymerase-primase complex) which plays an essential role in the initiation of DNA synthesis. During the S phase of the cell cycle, the DNA polymerase alpha complex (composed of a catalytic subunit POLA1, an accessory subunit POLA2 and two primase subunits, the catalytic subunit PRIM1 and the regulatory subunit PRIM2) is recruited to DNA at the replicative forks via direct interactions with MCM10 and WDHD1. The primase subunit of the polymerase alpha complex initiates DNA synthesis by oligomerising short RNA primers on both leading and lagging strands. These primers are initially extended by the polymerase alpha catalytic subunit and subsequently transferred to polymerase delta and polymerase epsilon for processive synthesis on the lagging and leading strand, respectively. This is DNA polymerase alpha subunit B (POLA2) from Homo sapiens (Human).